The chain runs to 173 residues: Large ribosomal subunit protein uL10 (173 aa).

It belongs to the universal ribosomal protein uL10 family. As to quaternary structure, part of the ribosomal stalk of the 50S ribosomal subunit. The N-terminus interacts with L11 and the large rRNA to form the base of the stalk. The C-terminus forms an elongated spine to which L12 dimers bind in a sequential fashion forming a multimeric L10(L12)X complex.

Its function is as follows. Forms part of the ribosomal stalk, playing a central role in the interaction of the ribosome with GTP-bound translation factors. The sequence is that of Large ribosomal subunit protein uL10 from Bifidobacterium adolescentis (strain ATCC 15703 / DSM 20083 / NCTC 11814 / E194a).